Reading from the N-terminus, the 117-residue chain is Putative pterin-4-alpha-carbinolamine dehydratase (117 aa).

Belongs to the pterin-4-alpha-carbinolamine dehydratase family.

It carries out the reaction (4aS,6R)-4a-hydroxy-L-erythro-5,6,7,8-tetrahydrobiopterin = (6R)-L-erythro-6,7-dihydrobiopterin + H2O. In Colwellia psychrerythraea (strain 34H / ATCC BAA-681) (Vibrio psychroerythus), this protein is Putative pterin-4-alpha-carbinolamine dehydratase.